The primary structure comprises 119 residues: Large ribosomal subunit protein bL20 (119 aa).

It belongs to the bacterial ribosomal protein bL20 family.

Functionally, binds directly to 23S ribosomal RNA and is necessary for the in vitro assembly process of the 50S ribosomal subunit. It is not involved in the protein synthesizing functions of that subunit. This is Large ribosomal subunit protein bL20 from Geobacillus thermodenitrificans (strain NG80-2).